Consider the following 489-residue polypeptide: Protein K15 (489 aa).

The N-terminal stretch at 1 to 26 (MKTLIFFWNLWLWALLVCFWCITLVC) is a signal peptide. 11 helical membrane-spanning segments follow: residues 29–49 (TNSI…VSAI), 63–83 (WPSS…WNLS), 89–109 (TYAC…LTLI), 121–141 (HGIL…VHMS), 148–168 (WIFF…FATV), 175–195 (LVSS…VSCC), 200–220 (CTAT…TGII), 237–257 (FLLL…LLAI), 264–284 (IKGH…LYVW), 296–316 (MLHL…VMLL), and 324–344 (ILTM…LLVF).

As to quaternary structure, interacts with host LYN; this interaction modulates B-cells signaling. Interacts with host ITSN2.

It localises to the host cell membrane. Its subcellular location is the host Golgi apparatus. It is found in the host trans-Golgi network. Functionally, plays a crucial role for reactivation of the virus from latency, early viral gene expression and virus production. Modulates host signaling pathways including activation of MAP kinases c-JUN-N-terminal kinase (JNK), ERK2, and NF-kappa-B resulting in the activation of AP-1 and NFAT-dependent gene expression in B-lymphocytes. When expressed in epithelial cells, induces the expression of several inflammatory and angiogenic genes. Also interferes with B-lymphocytes signaling through interaction with host LYN kinase. The polypeptide is Protein K15 (K15) (Human herpesvirus 8 type P (isolate GK18) (HHV-8)).